A 158-amino-acid polypeptide reads, in one-letter code: Endoribonuclease YbeY (158 aa).

3 residues coordinate Zn(2+): His121, His125, and His131.

This sequence belongs to the endoribonuclease YbeY family. The cofactor is Zn(2+).

It is found in the cytoplasm. Its function is as follows. Single strand-specific metallo-endoribonuclease involved in late-stage 70S ribosome quality control and in maturation of the 3' terminus of the 16S rRNA. The sequence is that of Endoribonuclease YbeY from Exiguobacterium sibiricum (strain DSM 17290 / CCUG 55495 / CIP 109462 / JCM 13490 / 255-15).